The following is a 151-amino-acid chain: Deoxyuridine 5'-triphosphate nucleotidohydrolase (151 aa).

Substrate-binding positions include Arg-70–Gly-72, Asn-83, and Leu-87–Asp-89.

This sequence belongs to the dUTPase family. It depends on Mg(2+) as a cofactor.

It catalyses the reaction dUTP + H2O = dUMP + diphosphate + H(+). Its pathway is pyrimidine metabolism; dUMP biosynthesis; dUMP from dCTP (dUTP route): step 2/2. This enzyme is involved in nucleotide metabolism: it produces dUMP, the immediate precursor of thymidine nucleotides and it decreases the intracellular concentration of dUTP so that uracil cannot be incorporated into DNA. This Methylococcus capsulatus (strain ATCC 33009 / NCIMB 11132 / Bath) protein is Deoxyuridine 5'-triphosphate nucleotidohydrolase.